Consider the following 639-residue polypeptide: Chaperone protein DnaK (639 aa).

The residue at position 198 (Thr-198) is a Phosphothreonine; by autocatalysis. Residues 603 to 618 (AKAQTQGGAQEGAAKQ) show a composition bias toward low complexity. Residues 603–639 (AKAQTQGGAQEGAAKQSNATADDVVDAEFEEVKDDKK) form a disordered region. Residues 625-639 (DVVDAEFEEVKDDKK) show a composition bias toward acidic residues.

It belongs to the heat shock protein 70 family.

Acts as a chaperone. This Shewanella oneidensis (strain ATCC 700550 / JCM 31522 / CIP 106686 / LMG 19005 / NCIMB 14063 / MR-1) protein is Chaperone protein DnaK.